A 359-amino-acid polypeptide reads, in one-letter code: Cyclin puc1 (359 aa).

This sequence belongs to the cyclin family.

In terms of biological role, function in exit from the mitotic cycle. Contributes to negative regulation of the timing of sexual development in fission yeast, and functions at the transition between cycling and non-cycling cells. Interacts with protein kinase A. In Schizosaccharomyces pombe (strain 972 / ATCC 24843) (Fission yeast), this protein is Cyclin puc1 (puc1).